A 530-amino-acid chain; its full sequence is Sugar transport protein MST6 (530 aa).

Over 1–18 the chain is Cytoplasmic; sequence MAGGVVVNNGGGKDYPGK. The chain crosses the membrane as a helical span at residues 19 to 39; that stretch reads LTMFVLFACIVAATGGLIFGY. Residues 40-81 are Extracellular-facing; that stretch reads DIGISGGVTSMNPFLIKFFPSVYRKEQAAEKNQSNQYCKFDS. Residues 82-102 form a helical membrane-spanning segment; sequence PLLTMFTSSLYLAALVASFFA. Residues 103–119 lie on the Cytoplasmic side of the membrane; the sequence is STVTRVAGRKWSMFGGG. Residues 120-140 form a helical membrane-spanning segment; that stretch reads VTFLVGAALNGAAKNVLMLIL. Residues 141–142 lie on the Extracellular side of the membrane; that stretch reads GR. A helical transmembrane segment spans residues 143 to 163; sequence VLLGVGVGFANQSVPLYLSEM. At 164–169 the chain is on the cytoplasmic side; the sequence is APARLR. A helical membrane pass occupies residues 170–190; it reads GMLNIGFQLMITIGILCANLI. Residues 191–204 are Extracellular-facing; it reads NYGTAKIKGGWGWR. The helical transmembrane segment at 205-225 threads the bilayer; sequence VSLALAAVPAAIIAVGALFLP. The Cytoplasmic portion of the chain corresponds to 226–291; that stretch reads DTPNSLIDRG…YRPQLTMAIA (66 aa). The helical transmembrane segment at 292–312 threads the bilayer; the sequence is IPLFQQLTGINVIMFYAPVLF. Residues 313–323 lie on the Extracellular side of the membrane; sequence KTLGFADDASL. Residues 324–344 traverse the membrane as a helical segment; the sequence is MSAVITGLVNVFATFVSIVTV. Residues 345–359 lie on the Cytoplasmic side of the membrane; the sequence is DRLGRRKLFLQGGTQ. The chain crosses the membrane as a helical span at residues 360–380; sequence MLACQIVVGSLIGAKFGFSGV. Residues 381 to 388 lie on the Extracellular side of the membrane; it reads ADIPKAYA. The helical transmembrane segment at 389–409 threads the bilayer; the sequence is AFVVLFICAYVAGFAWSWGPL. At 410 to 428 the chain is on the cytoplasmic side; it reads GWLVPSEIFPLEIRSAGQS. The chain crosses the membrane as a helical span at residues 429–449; sequence INVSVNMLFTFIIAQAFLPML. Residues 450-453 lie on the Extracellular side of the membrane; the sequence is CRFK. Residues 454-474 traverse the membrane as a helical segment; it reads FILFFFFGAWVVIMTLFVAFF. Topologically, residues 475–530 are cytoplasmic; that stretch reads LPETKNVPIEEMVLVWKSHWYWGRFIRDEDVHVGADVEMPAAGNRNGKVDPAKLAN.

The protein belongs to the major facilitator superfamily. Sugar transporter (TC 2.A.1.1) family. As to expression, expressed in leaf blades, leaf sheaths, anthers, ovaries and embryos. Expressed at low levels in roots and shoots.

It is found in the cell membrane. In terms of biological role, mediates active uptake of hexoses by sugar:proton symport. Can transport glucose, fructose, mannose, galactose, xylose and ribose. This is Sugar transport protein MST6 from Oryza sativa subsp. japonica (Rice).